The following is a 160-amino-acid chain: Probable transcriptional regulator YgiV (160 aa).

Functionally, represses expression of mcbR. This chain is Probable transcriptional regulator YgiV (ygiV), found in Escherichia coli (strain K12).